A 229-amino-acid chain; its full sequence is Large ribosomal subunit protein uL1 (229 aa).

The protein belongs to the universal ribosomal protein uL1 family. In terms of assembly, part of the 50S ribosomal subunit.

Its function is as follows. Binds directly to 23S rRNA. The L1 stalk is quite mobile in the ribosome, and is involved in E site tRNA release. Protein L1 is also a translational repressor protein, it controls the translation of the L11 operon by binding to its mRNA. This is Large ribosomal subunit protein uL1 from Ureaplasma urealyticum serovar 10 (strain ATCC 33699 / Western).